A 227-amino-acid polypeptide reads, in one-letter code: Ornithine decarboxylase antizyme 1 (227 aa).

Belongs to the ODC antizyme family. As to quaternary structure, interacts with ODC1 and thereby sterically blocks ODC homodimerization. Forms a ternary complex with PSMB4 and OAZ1 before PSMB4 is incorporated into the 20S proteasome. Interacts with AZIN2; this interaction disrupts the interaction between the antizyme and ODC1. Interacts with FAM171A1.

Ornithine decarboxylase (ODC) antizyme protein that negatively regulates ODC activity and intracellular polyamine biosynthesis and uptake in response to increased intracellular polyamine levels. Binds to ODC monomers, inhibiting the assembly of the functional ODC homodimer, and targets the monomers for ubiquitin-independent proteolytic destruction by the 26S proteasome. Triggers ODC degradation by inducing the exposure of a cryptic proteasome-interacting surface of ODC. Stabilizes AZIN2 by interfering with its ubiquitination. Also inhibits cellular uptake of polyamines by inactivating the polyamine uptake transporter. SMAD1/OAZ1/PSMB4 complex mediates the degradation of the CREBBP/EP300 repressor SNIP1. Involved in the translocation of AZIN2 from ER-Golgi intermediate compartment (ERGIC) to the cytosol. In Mus musculus (Mouse), this protein is Ornithine decarboxylase antizyme 1 (Oaz1).